A 706-amino-acid chain; its full sequence is MAAKSKKPLPSVDQLTKAQAKVEHKRLALEIAMHDERYYQKDAPTVSDAAYDSLRQRLNAVEARFPELVTTDSPSQKVGAQPSRAFAKIRHAVPMLSLGNAFSDEEVAEFVARVRRFLNLGADEPLAVVAEPKIDGLSLSLRYENGELVNAATRGDGFEGEDVTANVRTIKDVPHKLKGKNIPAVCEVRGEVYMLREDFLTLNKKQADSGDTIFANPRNSAAGSLRQKNVAITASRPLKFFAYAWGEMSAMPATTQFEMVKWFEKAGFAVNPRMILCRDVEALLRYYREIETERAQLSYDIDGVVYKVDRLDWQTRLGFVSRSPRWAIAHKFAAEQATTVLEKIDIQVGRTGALTPVARLAAVTVGGVVVQNATLHNEDEIARKDIREGDTVVIQRAGDVIPQVVSVVTDKRPKHAKPYSFPHVCPVCGSHAVREEGEAVRRCTGALICPAQAVERLKHFVSRLAFDIEGLGDKQIHEFYDAKLIMHPVDIFTLAKRDAHATDKLKDREGYGDVSVRNLFAAIDARRRIELNRLIFALGIRHVGEGNAKLLARHYGTIENFRAAMAEAAAAQTEEGNPSEAYADLNAIGGVGDIVADAVVEFFAEERNVKALNELLHEIEVLPAEQVRADSAVAGKTVVFTGSLTKFTREEAKAQAERLGAKVSGSVSKKTDYVVAGEEAGSKLTKARELGVAVLTEDEWLKLIEG.

Residues 48-52 (DAAYD), 97-98 (SL), and glutamate 131 each bind NAD(+). Lysine 133 (N6-AMP-lysine intermediate) is an active-site residue. Residues arginine 154, glutamate 191, lysine 307, and lysine 331 each coordinate NAD(+). Zn(2+) contacts are provided by cysteine 425, cysteine 428, cysteine 443, and cysteine 449. Residues 628 to 706 (RADSAVAGKT…EDEWLKLIEG (79 aa)) form the BRCT domain.

The protein belongs to the NAD-dependent DNA ligase family. LigA subfamily. Mg(2+) serves as cofactor. It depends on Mn(2+) as a cofactor.

It carries out the reaction NAD(+) + (deoxyribonucleotide)n-3'-hydroxyl + 5'-phospho-(deoxyribonucleotide)m = (deoxyribonucleotide)n+m + AMP + beta-nicotinamide D-nucleotide.. DNA ligase that catalyzes the formation of phosphodiester linkages between 5'-phosphoryl and 3'-hydroxyl groups in double-stranded DNA using NAD as a coenzyme and as the energy source for the reaction. It is essential for DNA replication and repair of damaged DNA. In Afipia carboxidovorans (strain ATCC 49405 / DSM 1227 / KCTC 32145 / OM5) (Oligotropha carboxidovorans), this protein is DNA ligase.